A 418-amino-acid chain; its full sequence is NADH-quinone oxidoreductase subunit H (418 aa).

Helical transmembrane passes span 15 to 35 (LVLG…LVAI), 83 to 103 (FVYF…FAFI), 123 to 143 (LPVA…GIVL), 164 to 184 (VISY…YAGS), 197 to 217 (VWFV…MVGE), 262 to 282 (LATA…MWAG), 287 to 307 (WWPV…YFWL), 321 to 341 (GLGW…AAVI), and 349 to 369 (YAHW…ALVL). The interval 394 to 418 (AAHRAGFHPGIPDTAAAGESAGGRE) is disordered.

It belongs to the complex I subunit 1 family. In terms of assembly, NDH-1 is composed of 14 different subunits. Subunits NuoA, H, J, K, L, M, N constitute the membrane sector of the complex.

It localises to the cell membrane. The enzyme catalyses a quinone + NADH + 5 H(+)(in) = a quinol + NAD(+) + 4 H(+)(out). NDH-1 shuttles electrons from NADH, via FMN and iron-sulfur (Fe-S) centers, to quinones in the respiratory chain. The immediate electron acceptor for the enzyme in this species is believed to be menaquinone. Couples the redox reaction to proton translocation (for every two electrons transferred, four hydrogen ions are translocated across the cytoplasmic membrane), and thus conserves the redox energy in a proton gradient. This subunit may bind ubiquinone. This chain is NADH-quinone oxidoreductase subunit H, found in Mycobacterium avium (strain 104).